A 552-amino-acid polypeptide reads, in one-letter code: Hydroxylamine reductase (552 aa).

Residues cysteine 5, cysteine 8, cysteine 20, and cysteine 27 each contribute to the [2Fe-2S] cluster site. 8 residues coordinate hybrid [4Fe-2O-2S] cluster: histidine 251, glutamate 275, cysteine 319, cysteine 407, cysteine 435, cysteine 460, glutamate 494, and lysine 496. Cysteine 407 bears the Cysteine persulfide mark.

Belongs to the HCP family. [2Fe-2S] cluster serves as cofactor. The cofactor is hybrid [4Fe-2O-2S] cluster.

Its subcellular location is the cytoplasm. It catalyses the reaction A + NH4(+) + H2O = hydroxylamine + AH2 + H(+). Its function is as follows. Catalyzes the reduction of hydroxylamine to form NH(3) and H(2)O. This is Hydroxylamine reductase from Shigella boydii serotype 4 (strain Sb227).